The chain runs to 344 residues: Biotin synthase (344 aa).

A Radical SAM core domain is found at 40–267 (AQVQVSTLLS…KSMVRLSAGR (228 aa)). [4Fe-4S] cluster is bound by residues Cys-55, Cys-59, and Cys-62. Positions 99, 130, 190, and 262 each coordinate [2Fe-2S] cluster.

The protein belongs to the radical SAM superfamily. Biotin synthase family. As to quaternary structure, homodimer. It depends on [4Fe-4S] cluster as a cofactor. The cofactor is [2Fe-2S] cluster.

The enzyme catalyses (4R,5S)-dethiobiotin + (sulfur carrier)-SH + 2 reduced [2Fe-2S]-[ferredoxin] + 2 S-adenosyl-L-methionine = (sulfur carrier)-H + biotin + 2 5'-deoxyadenosine + 2 L-methionine + 2 oxidized [2Fe-2S]-[ferredoxin]. Its pathway is cofactor biosynthesis; biotin biosynthesis; biotin from 7,8-diaminononanoate: step 2/2. Catalyzes the conversion of dethiobiotin (DTB) to biotin by the insertion of a sulfur atom into dethiobiotin via a radical-based mechanism. This chain is Biotin synthase, found in Xanthomonas axonopodis pv. citri (strain 306).